The following is a 919-amino-acid chain: MVRLRTLVRAIAAASVLTSGMAHGLGLGEITLKSALNQPLDAEIELLEVRDLGSGEVIPSLASPEEFSKAGVDRLYYLTDLKFTPVVKPNGKSVIRVTSSKPVQEPYLNFLVQVLWPNGRLLREYTVLLDPPLYSPQAAASAPQAPVSAPRATGAPRAPQAPAPVRTTAPAGSDTYRTVSNDTLWEIAQRNRTDRVSVPQAMLAFQELNPGAFVDGNINRLKSGQVLRIPTEQQMLERSPREALSQVQAQNQSWRGSRNPAAGSAGARQLDATQRNAAGSAPSKVDATDNLRLVSGEGKASKGADKGGKGDSKAIADTLAVTKESLDSTRRENEELQSRMQDLQSQLDKLQKLIQLKDAQLAKLQGQLGAEGQGAAQPNAALPDASQPNAAAQAPAQPGTPAAAAPTPAPAGEAPAAPAQPPVAPPPAPAAEKPPAPAVPAPAPVQAAEQPAPSFLDELLANPLWLAVIGGSALLALLVLLMILSRRNAQKEKEEAQAFAADTGEEQEDALDLGKDGFDDLTLDEPEPQVAAVAPQVEKTTAQTSDALGEADIYIAYGRFNQAAELLQNAIYDEPQRTDLRLKLMEVYAEMGDREGFARQENELREIGGAQPQVEQLKSRYPAMVAVAAVAGLAGAKLAQDELDSFSLDDLSLDDSGHAAKPDAAGQDLDDAFDLSLDDLGGDDVQADLKSDSGALDDLTLDSDLDLAASTPADKPVDDLDFGLDFAELAETPSQPKHDDLGDFSLDLDAPEDKLSDDDFLLSLNDEVPAAAPADNEFTLDTEAAEEPALSLPDDFDLSLADEPTEPAAPEKGEDSFAAQLDEVSAQLDELASNLDEPKSATPSFSAEDAAVASALDGDADDDFDFLSGADEAATKLDLARAYIDMGDSEGARDILDEVLAEGNDSQQAEARELLERLA.

Residues 1-24 (MVRLRTLVRAIAAASVLTSGMAHG) form the signal peptide. The segment covering 140 to 171 (ASAPQAPVSAPRATGAPRAPQAPAPVRTTAPA) has biased composition (low complexity). 2 disordered regions span residues 140 to 177 (ASAP…DTYR) and 237 to 312 (ERSP…KGDS). The 56-residue stretch at 174-229 (DTYRTVSNDTLWEIAQRNRTDRVSVPQAMLAFQELNPGAFVDGNINRLKSGQVLRI) folds into the LysM domain. The span at 245 to 256 (SQVQAQNQSWRG) shows a compositional bias: polar residues. Over residues 299-312 (KASKGADKGGKGDS) the composition is skewed to basic and acidic residues. Positions 319 to 367 (LAVTKESLDSTRRENEELQSRMQDLQSQLDKLQKLIQLKDAQLAKLQGQ) form a coiled coil. Positions 372–445 (GQGAAQPNAA…APAVPAPAPV (74 aa)) are disordered. Low complexity predominate over residues 390–417 (AAAQAPAQPGTPAAAAPTPAPAGEAPAA). Over residues 418–443 (PAQPPVAPPPAPAAEKPPAPAVPAPA) the composition is skewed to pro residues. The helical transmembrane segment at 464–484 (LWLAVIGGSALLALLVLLMIL) threads the bilayer. Residues 785 to 816 (AEEPALSLPDDFDLSLADEPTEPAAPEKGEDS) form a disordered region.

As to quaternary structure, interacts with FimL. Interacts with DgcP.

Its subcellular location is the cell inner membrane. Its function is as follows. Inner membrane hub protein that plays both cAMP-dependent and cAMP-independent roles in twitching motility. Regulates intracellular cyclic AMP (cAMP) levels through the activation of adenylate cyclase CyaB. Plays an essential role in a number of virulence mechanisms including type IV pilus (T4P)-mediated assembly and twitching motility as well as cAMP-dependent virulence gene expression. Also mediates type II secretion (T2S) of lipases and proteases. In addition, mediates the cAMP-independent localization of multiple T4P structural and regulatory components to the cell poles. This role in directing proteins to the cell pole is not restricted to type IV component and involves other proteins such as the diguanylate cyclase DgcP. This Pseudomonas aeruginosa (strain ATCC 15692 / DSM 22644 / CIP 104116 / JCM 14847 / LMG 12228 / 1C / PRS 101 / PAO1) protein is Motility hub protein FimV (fimV).